Here is a 296-residue protein sequence, read N- to C-terminus: Undecaprenyl-diphosphatase (296 aa).

Transmembrane regions (helical) follow at residues 48-68, 104-124, 131-151, 167-187, 208-228, 237-257, and 272-292; these read SAFT…AWVF, LTLW…LLFD, LFSV…MIFA, ITFF…WPGF, SDFT…LSLV, SHIP…LLSI, and FAIY…GFGI.

The protein belongs to the UppP family.

It is found in the cell membrane. The enzyme catalyses di-trans,octa-cis-undecaprenyl diphosphate + H2O = di-trans,octa-cis-undecaprenyl phosphate + phosphate + H(+). In terms of biological role, catalyzes the dephosphorylation of undecaprenyl diphosphate (UPP). Confers resistance to bacitracin. This is Undecaprenyl-diphosphatase from Staphylococcus carnosus (strain TM300).